The primary structure comprises 326 residues: MSRADEGRLIHLAKKREREKEDIEQQLRKLEEDKEKCRVGITNKFMANYETVEEVVKSKTYGLVSLDDMKNIQKNEISNRDLQVARGDQSSSTQSKDSQEAREKEEHVAKHTQKRFLSFAFDDEEDEEDAAPIIPKKRVGMDPTVDTSFLPDKEREEFLRKKKESLAAEWRVKQDAEKNEEITVAYAYWDGSSHRKNMKIKKGNTISQCLGRAIEALKKEFTELKSCTAENLMFVKEDLIIPHFYTFQDFIVTKAMGKTGPLFVFDSASDVRIRQDAALDYGESHPAKIVLRSWYEKNKHIYPASRWEPFVPSKKYGRNFDDLSDL.

Positions 77–111 are disordered; sequence ISNRDLQVARGDQSSSTQSKDSQEAREKEEHVAKH. Over residues 97–109 the composition is skewed to basic and acidic residues; it reads DSQEAREKEEHVA.

Belongs to the FAM50 family.

This is Protein FAM50 homolog from Caenorhabditis elegans.